The primary structure comprises 380 residues: Putative glutamate--cysteine ligase 2-2 (380 aa).

Belongs to the glutamate--cysteine ligase type 2 family. YbdK subfamily.

It catalyses the reaction L-cysteine + L-glutamate + ATP = gamma-L-glutamyl-L-cysteine + ADP + phosphate + H(+). ATP-dependent carboxylate-amine ligase which exhibits weak glutamate--cysteine ligase activity. The sequence is that of Putative glutamate--cysteine ligase 2-2 from Nocardia farcinica (strain IFM 10152).